The sequence spans 222 residues: UPF0758 protein YPN_3801 (222 aa).

The MPN domain maps to 100-222; it reads VLLNPGITQK…CVSFAERGWL (123 aa). Zn(2+) is bound by residues His-171, His-173, and Asp-184. A JAMM motif motif is present at residues 171–184; sequence HNHPSGKAEPSQAD.

Belongs to the UPF0758 family. YicR subfamily.

The protein is UPF0758 protein YPN_3801 of Yersinia pestis bv. Antiqua (strain Nepal516).